We begin with the raw amino-acid sequence, 50 residues long: Sproutin (50 aa).

The residue at position 8 (Ser8) is a Phosphoserine; by PKC.

As to expression, brain.

Functionally, neurite outgrowth factor. This is Sproutin from Rattus norvegicus (Rat).